We begin with the raw amino-acid sequence, 608 residues long: Aspartate--tRNA(Asp/Asn) ligase (608 aa).

Glutamate 175 serves as a coordination point for L-aspartate. An aspartate region spans residues 199-202; it reads QLFK. Residue arginine 221 coordinates L-aspartate. ATP-binding positions include 221–223 and glutamine 230; that span reads RDE. Residue histidine 453 coordinates L-aspartate. Glutamate 487 contacts ATP. Arginine 494 serves as a coordination point for L-aspartate. Residue 539–542 participates in ATP binding; the sequence is GWDR. Residues 566 to 608 form a disordered region; the sequence is IDPLTDAPAAITPQQRKEAGIDAKPKPKAEAQAEAQAEESAEK. Over residues 580–596 the composition is skewed to basic and acidic residues; sequence QRKEAGIDAKPKPKAEA.

Belongs to the class-II aminoacyl-tRNA synthetase family. Type 1 subfamily. In terms of assembly, homodimer.

The protein resides in the cytoplasm. It catalyses the reaction tRNA(Asx) + L-aspartate + ATP = L-aspartyl-tRNA(Asx) + AMP + diphosphate. Functionally, aspartyl-tRNA synthetase with relaxed tRNA specificity since it is able to aspartylate not only its cognate tRNA(Asp) but also tRNA(Asn). Reaction proceeds in two steps: L-aspartate is first activated by ATP to form Asp-AMP and then transferred to the acceptor end of tRNA(Asp/Asn). The protein is Aspartate--tRNA(Asp/Asn) ligase of Corynebacterium glutamicum (strain ATCC 13032 / DSM 20300 / JCM 1318 / BCRC 11384 / CCUG 27702 / LMG 3730 / NBRC 12168 / NCIMB 10025 / NRRL B-2784 / 534).